The primary structure comprises 170 residues: MORN repeat-containing protein 5 (170 aa).

MORN repeat units lie at residues Tyr-8 to Arg-30, Tyr-31 to Arg-53, and Phe-54 to Gln-75.

Only detected in testis (at protein level).

Its subcellular location is the cell projection. It localises to the cilium. It is found in the flagellum. The sequence is that of MORN repeat-containing protein 5 (Morn5) from Mus musculus (Mouse).